We begin with the raw amino-acid sequence, 319 residues long: Ferrochelatase (319 aa).

Fe cation-binding residues include H192 and E271.

Belongs to the ferrochelatase family.

It localises to the cytoplasm. The catalysed reaction is heme b + 2 H(+) = protoporphyrin IX + Fe(2+). It functions in the pathway porphyrin-containing compound metabolism; protoheme biosynthesis; protoheme from protoporphyrin-IX: step 1/1. Catalyzes the ferrous insertion into protoporphyrin IX. The polypeptide is Ferrochelatase (Geotalea uraniireducens (strain Rf4) (Geobacter uraniireducens)).